A 305-amino-acid chain; its full sequence is Acyl transferase (305 aa).

Catalysis depends on charge relay system residues Ser-116, Asp-213, and His-243.

It belongs to the LuxD family.

Its pathway is lipid metabolism; fatty acid reduction for biolumincescence. Its function is as follows. Acyl transferase is part of the fatty acid reductase system required for aldehyde biosynthesis; it produces fatty acids for the luminescent reaction. The sequence is that of Acyl transferase from Photobacterium leiognathi.